A 178-amino-acid chain; its full sequence is UPF0114 protein HPSH_00970 (178 aa).

4 helical membrane-spanning segments follow: residues 15 to 35, 54 to 74, 102 to 122, and 145 to 165; these read WLLA…GYVF, LVLS…VLMV, FNAL…IFLL, and PIFW…LAAV.

Belongs to the UPF0114 family.

The protein resides in the cell membrane. This is UPF0114 protein HPSH_00970 from Helicobacter pylori (strain Shi470).